The following is a 158-amino-acid chain: GTP-dependent dephospho-CoA kinase (158 aa).

GTP contacts are provided by D35, V36, D54, K56, E109, and D132.

Belongs to the GTP-dependent DPCK family.

It catalyses the reaction 3'-dephospho-CoA + GTP = GDP + CoA + H(+). It participates in cofactor biosynthesis; coenzyme A biosynthesis. Its function is as follows. Catalyzes the GTP-dependent phosphorylation of the 3'-hydroxyl group of dephosphocoenzyme A to form coenzyme A (CoA). This is GTP-dependent dephospho-CoA kinase from Methanococcus maripaludis (strain C7 / ATCC BAA-1331).